The sequence spans 128 residues: D-ribose pyranase (128 aa).

His-20 (proton donor) is an active-site residue. Residues Asp-28, His-95, and 117 to 119 (YSN) each bind substrate.

Belongs to the RbsD / FucU family. RbsD subfamily. As to quaternary structure, homodecamer.

The protein resides in the cytoplasm. It catalyses the reaction beta-D-ribopyranose = beta-D-ribofuranose. It functions in the pathway carbohydrate metabolism; D-ribose degradation; D-ribose 5-phosphate from beta-D-ribopyranose: step 1/2. Functionally, catalyzes the interconversion of beta-pyran and beta-furan forms of D-ribose. This chain is D-ribose pyranase, found in Thermosipho africanus (strain TCF52B).